We begin with the raw amino-acid sequence, 332 residues long: Putative pumilio homolog 20 (332 aa).

One can recognise a PUM-HD domain in the interval 1–332 (MAHQLRFAAA…NIASILNSIR (332 aa)). 2 Pumilio repeats span residues 89 to 124 (SDPD…FAAA) and 125 to 159 (ILRR…AMYE). A Pumilio 3; degenerate repeat occupies 160–191 (HILHYASHIARDKHGNLALNDIITDAYRNKLF). Pumilio repeat units lie at residues 192–228 (DVIA…NIVV), 229–266 (SLRG…ELME), and 267–303 (CEGD…DLFW).

Its subcellular location is the cytoplasm. Functionally, sequence-specific RNA-binding protein that regulates translation and mRNA stability by binding the 3'-UTR of target mRNAs. In Arabidopsis thaliana (Mouse-ear cress), this protein is Putative pumilio homolog 20 (APUM20).